A 1026-amino-acid polypeptide reads, in one-letter code: RecBCD enzyme subunit RecB (1026 aa).

In terms of domain architecture, UvrD-like helicase ATP-binding spans 1–438; that stretch reads MSSFDIFSPT…LILDTNYRST (438 aa). The tract at residues 1 to 766 is DNA-binding and helicase activity, interacts with RecC; sequence MSSFDIFSPT…LANYANITQH (766 aa). 21 to 28 contacts ATP; it reads ASAGTGKT. Positions 452-700 constitute a UvrD-like helicase C-terminal domain; the sequence is PSPFLETPQT…KITTVHSSKG (249 aa). A nuclease activity, interacts with RecD and RecA region spans residues 815-1026; sequence SQPIYSFSST…KGNGFLQPSP (212 aa). Residues H854, D940, and D953 each coordinate Mg(2+). D953 functions as the For nuclease activity in the catalytic mechanism.

This sequence belongs to the helicase family. UvrD subfamily. As to quaternary structure, heterotrimer of RecB, RecC and RecD. All subunits contribute to DNA-binding. Interacts with RecA. Mg(2+) is required as a cofactor.

The catalysed reaction is Exonucleolytic cleavage (in the presence of ATP) in either 5'- to 3'- or 3'- to 5'-direction to yield 5'-phosphooligonucleotides.. It catalyses the reaction Couples ATP hydrolysis with the unwinding of duplex DNA by translocating in the 3'-5' direction.. The enzyme catalyses ATP + H2O = ADP + phosphate + H(+). In terms of biological role, a helicase/nuclease that prepares dsDNA breaks (DSB) for recombinational DNA repair. Binds to DSBs and unwinds DNA via a highly rapid and processive ATP-dependent bidirectional helicase activity. Unwinds dsDNA until it encounters a Chi (crossover hotspot instigator) sequence from the 3' direction. Cuts ssDNA a few nucleotides 3' to the Chi site. The properties and activities of the enzyme are changed at Chi. The Chi-altered holoenzyme produces a long 3'-ssDNA overhang and facilitates RecA-binding to the ssDNA for homologous DNA recombination and repair. Holoenzyme degrades any linearized DNA that is unable to undergo homologous recombination. In the holoenzyme this subunit contributes ATPase, 3'-5' helicase, exonuclease activity and loads RecA onto ssDNA. This Chlamydia muridarum (strain MoPn / Nigg) protein is RecBCD enzyme subunit RecB.